We begin with the raw amino-acid sequence, 320 residues long: Phosphoribosylaminoimidazole-succinocarboxamide synthase (320 aa).

The interval 283–303 (ESDWDRNSPPPPLPESIAHQT) is disordered.

Belongs to the SAICAR synthetase family.

It carries out the reaction 5-amino-1-(5-phospho-D-ribosyl)imidazole-4-carboxylate + L-aspartate + ATP = (2S)-2-[5-amino-1-(5-phospho-beta-D-ribosyl)imidazole-4-carboxamido]succinate + ADP + phosphate + 2 H(+). It functions in the pathway purine metabolism; IMP biosynthesis via de novo pathway; 5-amino-1-(5-phospho-D-ribosyl)imidazole-4-carboxamide from 5-amino-1-(5-phospho-D-ribosyl)imidazole-4-carboxylate: step 1/2. In Rhodopirellula baltica (strain DSM 10527 / NCIMB 13988 / SH1), this protein is Phosphoribosylaminoimidazole-succinocarboxamide synthase.